Consider the following 147-residue polypeptide: Ribosome-binding factor A (147 aa).

The disordered stretch occupies residues 123-147; it reads LAKLKEGAQPAGDANPYKTSDEEED.

The protein belongs to the RbfA family. Monomer. Binds 30S ribosomal subunits, but not 50S ribosomal subunits or 70S ribosomes.

It is found in the cytoplasm. Its function is as follows. One of several proteins that assist in the late maturation steps of the functional core of the 30S ribosomal subunit. Associates with free 30S ribosomal subunits (but not with 30S subunits that are part of 70S ribosomes or polysomes). Required for efficient processing of 16S rRNA. May interact with the 5'-terminal helix region of 16S rRNA. This is Ribosome-binding factor A from Corynebacterium aurimucosum (strain ATCC 700975 / DSM 44827 / CIP 107346 / CN-1) (Corynebacterium nigricans).